An 805-amino-acid chain; its full sequence is Phosphoinositide 3-kinase adapter protein 1 (805 aa).

The region spanning 8–145 is the TIR domain; it reads RGCDILIVYS…AVKKAISEDS (138 aa). The tract at residues 10–144 is necessary and sufficient to mediate inhibition of NF-kappa-B downstream of activated TLRs; may mediate interaction with MYD88 and TIRAP; that stretch reads CDILIVYSPD…AAVKKAISED (135 aa). The segment at 145 to 165 is disordered; that stretch reads SGCDSVTDTEPEDEKVVSYSK. Residues 181–317 form the DBB domain; that stretch reads VQPDRIRCGA…NIPASGLHLF (137 aa). Position 263 is a phosphotyrosine (tyrosine 263). Phosphotyrosine; by SYK is present on residues tyrosine 419, tyrosine 444, and tyrosine 459. Tyrosine 513 carries the post-translational modification Phosphotyrosine; by ABL1. Residues 527–547 form a disordered region; the sequence is ASRPPVPVPRPETTAPGAHQL. Residues tyrosine 553 and tyrosine 570 each carry the phosphotyrosine; by ABL1 modification. The tract at residues 571–590 is disordered; it reads VSSESIRKGPPVRPWRDRPQ. Tyrosine 594 is subject to Phosphotyrosine; by ABL1. Residue serine 642 is modified to Phosphoserine. A coiled-coil region spans residues 645–667; the sequence is FQQENLKRLRDSITRRQREKQKS. Positions 654-672 are enriched in basic and acidic residues; the sequence is RDSITRRQREKQKSGKQTD. Residues 654-679 are disordered; it reads RDSITRRQREKQKSGKQTDLEITVPI. Tyrosine 694 bears the Phosphotyrosine; by ABL1 mark. Residues 697–805 form a disordered region; sequence GPRKSVIPPR…PPPPVPPRGR (109 aa). Residues 707-716 are compositionally biased toward basic and acidic residues; it reads TELRRGDWKT. Residues 717 to 740 are compositionally biased toward low complexity; it reads DSTSSTASSTSNRSSTRSLLSVSS. Serine 718 carries the phosphoserine modification. Residues 795–805 show a composition bias toward pro residues; sequence HPPPPVPPRGR.

As to quaternary structure, homooligomer. Interacts (phosphorylated on tyrosine residues within YXXM motifs) with PIK3R1 (via SH2 domain); required for BCR- and TLR-mediated activation of phosphoinositide 3-kinase. Interacts (via polyproline C-terminal region) with ABI1 (via SH3 domain); the interaction promotes phosphorylation of PIK3AP1 by ABL1. May interact with MYD88 and TIRAP. In terms of processing, constitutively phosphorylated. Phosphorylated on tyrosine residues in C-terminal region by ABL1. Phosphorylated on tyrosine residues within the YXXM motifs by BTK and SYK. Isoform 1 and isoform 2 are phosphorylated on tyrosine residues, most likely within the YXXM motifs, via CD19 activation. Toll-like receptor activation induces appearance of a phosphorylated form associated with membranes. In terms of tissue distribution, expressed in natural killer (NK) cells.

Its subcellular location is the cytoplasm. The protein resides in the cell membrane. In terms of biological role, signaling adapter that contributes to B-cell development by linking B-cell receptor (BCR) signaling to the phosphoinositide 3-kinase (PI3K)-Akt signaling pathway. Has a complementary role to the BCR coreceptor CD19, coupling BCR and PI3K activation by providing a docking site for the PI3K subunit PIK3R1. Alternatively, links Toll-like receptor (TLR) signaling to PI3K activation, a process preventing excessive inflammatory cytokine production. Also involved in the activation of PI3K in natural killer cells. May be involved in the survival of mature B-cells via activation of REL. This Homo sapiens (Human) protein is Phosphoinositide 3-kinase adapter protein 1 (PIK3AP1).